The sequence spans 78 residues: Short neurotoxin OH-5 (78 aa).

A signal peptide spans 1–21 (MKNLLLTFLVVTIVCLDLGYT). 4 disulfides stabilise this stretch: Cys-24–Cys-40, Cys-33–Cys-58, Cys-62–Cys-70, and Cys-71–Cys-76.

It belongs to the three-finger toxin family. Short-chain subfamily. In terms of tissue distribution, expressed by the venom gland.

It is found in the secreted. This three-finger toxin binds and inhibits the nicotinic acetylcholine receptor (nAChR). The protein is Short neurotoxin OH-5 of Ophiophagus hannah (King cobra).